The chain runs to 161 residues: Regulator of ribonuclease activity A (161 aa).

It belongs to the RraA family. Homotrimer. Binds to both RNA-binding sites in the C-terminal region of Rne and to RhlB.

It localises to the cytoplasm. Functionally, globally modulates RNA abundance by binding to RNase E (Rne) and regulating its endonucleolytic activity. Can modulate Rne action in a substrate-dependent manner by altering the composition of the degradosome. Modulates RNA-binding and helicase activities of the degradosome. The polypeptide is Regulator of ribonuclease activity A (Tolumonas auensis (strain DSM 9187 / NBRC 110442 / TA 4)).